The following is a 477-amino-acid chain: Ribulose bisphosphate carboxylase large chain (477 aa).

A propeptide spanning residues Met-1 to Ser-2 is cleaved from the precursor. Pro-3 bears the N-acetylproline mark. Residue Lys-14 is modified to N6,N6,N6-trimethyllysine. The substrate site is built by Asn-123 and Thr-173. Lys-175 acts as the Proton acceptor in catalysis. Lys-177 contributes to the substrate binding site. The Mg(2+) site is built by Lys-201, Asp-203, and Glu-204. N6-carboxylysine is present on Lys-201. The active-site Proton acceptor is His-294. Substrate contacts are provided by Arg-295, His-327, and Ser-379.

It belongs to the RuBisCO large chain family. Type I subfamily. In terms of assembly, heterohexadecamer of 8 large chains and 8 small chains; disulfide-linked. The disulfide link is formed within the large subunit homodimers. Requires Mg(2+) as cofactor. Post-translationally, the disulfide bond which can form in the large chain dimeric partners within the hexadecamer appears to be associated with oxidative stress and protein turnover.

It localises to the plastid. The protein localises to the chloroplast. The enzyme catalyses 2 (2R)-3-phosphoglycerate + 2 H(+) = D-ribulose 1,5-bisphosphate + CO2 + H2O. It catalyses the reaction D-ribulose 1,5-bisphosphate + O2 = 2-phosphoglycolate + (2R)-3-phosphoglycerate + 2 H(+). In terms of biological role, ruBisCO catalyzes two reactions: the carboxylation of D-ribulose 1,5-bisphosphate, the primary event in carbon dioxide fixation, as well as the oxidative fragmentation of the pentose substrate in the photorespiration process. Both reactions occur simultaneously and in competition at the same active site. In Nicotiana otophora (Tobacco), this protein is Ribulose bisphosphate carboxylase large chain.